The chain runs to 201 residues: Cytochrome c oxidase assembly protein CtaG (201 aa).

The Cytoplasmic segment spans residues 1 to 13 (MTDQGENEKKQRR). Residues 14-36 (SNATIAVACLSFFVCMIGAAYAS) traverse the membrane as a helical; Signal-anchor for type II membrane protein segment. The Periplasmic segment spans residues 37-201 (VPLYRIFCQV…KAVGSTRNGG (165 aa)).

The protein belongs to the COX11/CtaG family.

The protein resides in the cell inner membrane. Exerts its effect at some terminal stage of cytochrome c oxidase synthesis, probably by being involved in the insertion of the copper B into subunit I. This chain is Cytochrome c oxidase assembly protein CtaG, found in Brucella ovis (strain ATCC 25840 / 63/290 / NCTC 10512).